The chain runs to 216 residues: Adenylate kinase (216 aa).

10-15 (GAGKGT) contributes to the ATP binding site. Residues 30–59 (STGDMLRAAVAAGTEVGKRAKAVMDAGKLV) are NMP. AMP is bound by residues Thr31, Arg36, 57 to 59 (KLV), 85 to 88 (GFPR), and Gln92. Residues 126-163 (GRYTCANCGAGYHDENLRPKVEGVCDRCGSTHFKRRAD) form an LID region. An ATP-binding site is contributed by Arg127. Zn(2+) is bound by residues Cys130, Cys133, Cys150, and Cys153. Positions 160 and 172 each coordinate AMP. Residue Ala200 participates in ATP binding.

The protein belongs to the adenylate kinase family. As to quaternary structure, monomer.

It is found in the cytoplasm. It catalyses the reaction AMP + ATP = 2 ADP. The protein operates within purine metabolism; AMP biosynthesis via salvage pathway; AMP from ADP: step 1/1. In terms of biological role, catalyzes the reversible transfer of the terminal phosphate group between ATP and AMP. Plays an important role in cellular energy homeostasis and in adenine nucleotide metabolism. This Rhizobium rhizogenes (strain K84 / ATCC BAA-868) (Agrobacterium radiobacter) protein is Adenylate kinase.